A 543-amino-acid chain; its full sequence is Telomerase Cajal body protein 1 homolog (543 aa).

The segment at 95-128 (GRPKNAVESPHAGVPMETSLAAEEEANGDEEEES) is disordered. Residues 116–127 (AEEEANGDEEEE) are compositionally biased toward acidic residues. 3 WD repeats span residues 237–283 (PEGG…LRCS), 291–329 (DEVM…RFCD), and 378–421 (GHKG…QPLV).

The protein belongs to the TCAB1 family.

Its subcellular location is the nucleus. It localises to the cajal body. Functionally, RNA chaperone that plays a key role in Cajal body formation. Specifically recognizes and binds the Cajal body box (CAB box) present in both small Cajal body RNAs (scaRNAs). Probably acts by mediating localization of scaRNAs to Cajal bodies. The sequence is that of Telomerase Cajal body protein 1 homolog from Drosophila melanogaster (Fruit fly).